Consider the following 159-residue polypeptide: Phosphopantetheine adenylyltransferase (159 aa).

T10 lines the substrate pocket. Residues 10–11 (TF) and H18 contribute to the ATP site. Substrate contacts are provided by K42, M74, and R88. ATP-binding positions include 89–91 (GLR), E99, and 124–130 (WSFISSS).

It belongs to the bacterial CoaD family. Homohexamer. Mg(2+) serves as cofactor.

It localises to the cytoplasm. It catalyses the reaction (R)-4'-phosphopantetheine + ATP + H(+) = 3'-dephospho-CoA + diphosphate. It participates in cofactor biosynthesis; coenzyme A biosynthesis; CoA from (R)-pantothenate: step 4/5. Its function is as follows. Reversibly transfers an adenylyl group from ATP to 4'-phosphopantetheine, yielding dephospho-CoA (dPCoA) and pyrophosphate. The protein is Phosphopantetheine adenylyltransferase of Salmonella agona (strain SL483).